Here is a 338-residue protein sequence, read N- to C-terminus: MSFIDEVKIHVKSGDGGPGCVSFRHEKFIEFGGPDGGDGGKGGNVIVEASRNLSTLLDLRQHPHQKAGSGKNGMGKDRHGAYGKDLRLLLPVGTVIKDAETDEVLADLTEPGQPLVLLKGGRGGQGNARFATATHKAPRFAQPGEPGEERWLRLELKLMADVGLLGMPSVGKSSLITKVSAARPKIAEYHFTTLKPNLGVVAYKNYKSFVMADIPGLIEGAHEGAGLGHRFLKHLERTGHLLHILDISWMPDRDPIREYEAINKELSLFNPELAEKKQTIVINKMDLPVVKENLAKVLPYFQERGLKVFPISAATGEGIPALLDEIARQLWGAAEEEW.

Residues 1–159 (MSFIDEVKIH…RWLRLELKLM (159 aa)) form the Obg domain. The region spanning 160–331 (ADVGLLGMPS…LLDEIARQLW (172 aa)) is the OBG-type G domain. GTP-binding positions include 166-173 (GMPSVGKS), 191-195 (FTTLK), 213-216 (DIPG), 283-286 (NKMD), and 312-314 (SAA). Residues Ser-173 and Thr-193 each contribute to the Mg(2+) site.

This sequence belongs to the TRAFAC class OBG-HflX-like GTPase superfamily. OBG GTPase family. Monomer. It depends on Mg(2+) as a cofactor.

Its subcellular location is the cytoplasm. Its function is as follows. An essential GTPase which binds GTP, GDP and possibly (p)ppGpp with moderate affinity, with high nucleotide exchange rates and a fairly low GTP hydrolysis rate. Plays a role in control of the cell cycle, stress response, ribosome biogenesis and in those bacteria that undergo differentiation, in morphogenesis control. This Geotalea daltonii (strain DSM 22248 / JCM 15807 / FRC-32) (Geobacter daltonii) protein is GTPase Obg.